A 409-amino-acid polypeptide reads, in one-letter code: uncharacterized protein (409 aa).

This is an uncharacterized protein from Mycoplasma genitalium (strain ATCC 33530 / DSM 19775 / NCTC 10195 / G37) (Mycoplasmoides genitalium).